We begin with the raw amino-acid sequence, 129 residues long: S-adenosylmethionine decarboxylase proenzyme (129 aa).

Residue serine 63 is the Schiff-base intermediate with substrate; via pyruvic acid of the active site. Pyruvic acid (Ser); by autocatalysis is present on serine 63. Histidine 68 functions as the Proton acceptor; for processing activity in the catalytic mechanism. Cysteine 83 functions as the Proton donor; for catalytic activity in the catalytic mechanism.

This sequence belongs to the prokaryotic AdoMetDC family. Type 1 subfamily. Heterotetramer of two alpha and two beta chains arranged as a dimer of alpha/beta heterodimers. Pyruvate serves as cofactor. In terms of processing, is synthesized initially as an inactive proenzyme. Formation of the active enzyme involves a self-maturation process in which the active site pyruvoyl group is generated from an internal serine residue via an autocatalytic post-translational modification. Two non-identical subunits are generated from the proenzyme in this reaction, and the pyruvate is formed at the N-terminus of the alpha chain, which is derived from the carboxyl end of the proenzyme. The post-translation cleavage follows an unusual pathway, termed non-hydrolytic serinolysis, in which the side chain hydroxyl group of the serine supplies its oxygen atom to form the C-terminus of the beta chain, while the remainder of the serine residue undergoes an oxidative deamination to produce ammonia and the pyruvoyl group blocking the N-terminus of the alpha chain.

The enzyme catalyses S-adenosyl-L-methionine + H(+) = S-adenosyl 3-(methylsulfanyl)propylamine + CO2. Its pathway is amine and polyamine biosynthesis; S-adenosylmethioninamine biosynthesis; S-adenosylmethioninamine from S-adenosyl-L-methionine: step 1/1. Functionally, catalyzes the decarboxylation of S-adenosylmethionine to S-adenosylmethioninamine (dcAdoMet), the propylamine donor required for the synthesis of the polyamines spermine and spermidine from the diamine putrescine. This chain is S-adenosylmethionine decarboxylase proenzyme, found in Shouchella clausii (strain KSM-K16) (Alkalihalobacillus clausii).